Consider the following 167-residue polypeptide: Type IV major pilin protein PilE (167 aa).

The propeptide at 1 to 7 is leader sequence; it reads MNTLQKG. Position 8 is an N-methylphenylalanine (phenylalanine 8). The helical transmembrane segment at 8–28 threads the bilayer; the sequence is FTLIELMIVIAIVGILAAVAL. An O-linked (GlcNAc...) serine glycan is attached at serine 70. An intrachain disulfide couples cysteine 127 to cysteine 160.

Belongs to the N-Me-Phe pilin family. As to quaternary structure, the pili are polar flexible filaments of about 5.4 nanometers diameter and 2.5 micrometers average length; they consist of only a single polypeptide chain arranged in a helical configuration of five subunits per turn in the assembled pilus.

The protein resides in the fimbrium. Its subcellular location is the membrane. In terms of biological role, major component of the type IV pilus (T4P) that plays a role in cellular adherence, microcolony formation, resistance to neutrophil mediated killing, twitching motility as well as transformation. Mediates the attachment and the formation of bacterial microcolonies on host epithelial cells. Mechanistically, pili retractation induces host NF-kappa-B activation in infected cells, which is temporally associated with the formation of gonococcal microcolonies. The protein is Type IV major pilin protein PilE (pilE) of Neisseria gonorrhoeae.